The sequence spans 337 residues: Neurogenic differentiation factor 6 (337 aa).

The tract at residues 43–82 (LRGKSIKRAPGEETEKEEEEEDREEEDENGLPRRRGLRKK) is disordered. Residues 54–71 (EETEKEEEEEDREEEDEN) show a composition bias toward acidic residues. The Nuclear localization signal signature appears at 80–86 (RKKKTTK). One can recognise a bHLH domain in the interval 94-146 (FRRQEANARERNRMHGLNDALDNLRKVVPCYSKTQKLSKIETLRLAKNYIWAL).

As to quaternary structure, efficient DNA binding requires dimerization with another bHLH protein.

Its subcellular location is the nucleus. Its function is as follows. Activates E box-dependent transcription in collaboration with TCF3/E47. May be a trans-acting factor involved in the development and maintenance of the mammalian nervous system. Transactivates the promoter of its own gene. This is Neurogenic differentiation factor 6 (NEUROD6) from Bos taurus (Bovine).